The sequence spans 90 residues: Phosphocarrier protein NPr (90 aa).

In terms of domain architecture, HPr spans 2 to 90 (TQYRRVAIKN…ALFESGFDED (89 aa)). His-16 serves as the catalytic Pros-phosphohistidine intermediate.

The protein belongs to the HPr family.

It is found in the cytoplasm. Component of the phosphoenolpyruvate-dependent nitrogen-metabolic phosphotransferase system (nitrogen-metabolic PTS), that seems to be involved in regulating nitrogen metabolism. The phosphoryl group from phosphoenolpyruvate (PEP) is transferred to the phosphoryl carrier protein NPr by enzyme I-Ntr. Phospho-NPr then transfers it to EIIA-Ntr. Could function in the transcriptional regulation of sigma-54 dependent operons in conjunction with the NPr (PtsO) and EIIA-Ntr (PtsN) proteins. This is Phosphocarrier protein NPr (ptsO) from Proteus mirabilis (strain HI4320).